The sequence spans 466 residues: UDP-N-acetylmuramate--L-alanine ligase (466 aa).

ATP is bound at residue 117 to 123; the sequence is GTHGKTT.

This sequence belongs to the MurCDEF family.

Its subcellular location is the cytoplasm. The enzyme catalyses UDP-N-acetyl-alpha-D-muramate + L-alanine + ATP = UDP-N-acetyl-alpha-D-muramoyl-L-alanine + ADP + phosphate + H(+). The protein operates within cell wall biogenesis; peptidoglycan biosynthesis. Its function is as follows. Cell wall formation. This chain is UDP-N-acetylmuramate--L-alanine ligase, found in Streptomyces griseus subsp. griseus (strain JCM 4626 / CBS 651.72 / NBRC 13350 / KCC S-0626 / ISP 5235).